Here is an 848-residue protein sequence, read N- to C-terminus: ATP-dependent Clp protease ATP-binding subunit ClpC1 (848 aa).

A Clp R domain is found at 2 to 144 (FERFTDRARR…RQQVIQLLSG (143 aa)). Repeat regions lie at residues 5–70 (FTDR…IGQG) and 80–144 (FTPR…LLSG). Positions 171-418 (LDQFGRNLTA…RMRIRRMTAP (248 aa)) are i. 216–223 (GEPGVGKT) serves as a coordination point for ATP. The 36-residue stretch at 425–460 (DEKIAEARREKESAIDAQDFEKAASLRDREKTLVAQ) folds into the UVR domain. Residues 479–670 (VDDEQIAEVL…VLIFTSNLGT (192 aa)) form an II region. Position 553–560 (553–560 (GPSGVGKT)) interacts with ATP. The interval 821-848 (TGTRKPPAEPDLAKAGAHSAGGPEPAAR) is disordered.

This sequence belongs to the ClpA/ClpB family. ClpC subfamily.

Functionally, ATP-dependent specificity component of the Clp protease. It directs the protease to specific substrates. Can perform chaperone functions in the absence of ClpP. Degrades anti-sigma-E factor RseA in the presence of ClpP2. The polypeptide is ATP-dependent Clp protease ATP-binding subunit ClpC1 (clpC1) (Mycobacterium tuberculosis (strain ATCC 25618 / H37Rv)).